A 182-amino-acid polypeptide reads, in one-letter code: Ribosome maturation factor RimM (182 aa).

In terms of domain architecture, PRC barrel spans 103–182 (EDDYYWKDLM…RVEVDWDPGF (80 aa)).

It belongs to the RimM family. Binds ribosomal protein uS19.

The protein resides in the cytoplasm. An accessory protein needed during the final step in the assembly of 30S ribosomal subunit, possibly for assembly of the head region. Essential for efficient processing of 16S rRNA. May be needed both before and after RbfA during the maturation of 16S rRNA. It has affinity for free ribosomal 30S subunits but not for 70S ribosomes. The protein is Ribosome maturation factor RimM of Yersinia pestis bv. Antiqua (strain Antiqua).